A 417-amino-acid chain; its full sequence is NADH-quinone oxidoreductase subunit D (417 aa).

It belongs to the complex I 49 kDa subunit family. NDH-1 is composed of 14 different subunits. Subunits NuoB, C, D, E, F, and G constitute the peripheral sector of the complex.

The protein localises to the cell inner membrane. The catalysed reaction is a quinone + NADH + 5 H(+)(in) = a quinol + NAD(+) + 4 H(+)(out). NDH-1 shuttles electrons from NADH, via FMN and iron-sulfur (Fe-S) centers, to quinones in the respiratory chain. The immediate electron acceptor for the enzyme in this species is believed to be ubiquinone. Couples the redox reaction to proton translocation (for every two electrons transferred, four hydrogen ions are translocated across the cytoplasmic membrane), and thus conserves the redox energy in a proton gradient. The sequence is that of NADH-quinone oxidoreductase subunit D from Burkholderia lata (strain ATCC 17760 / DSM 23089 / LMG 22485 / NCIMB 9086 / R18194 / 383).